The following is a 343-amino-acid chain: Transcription factor MYB11 (343 aa).

2 HTH myb-type domains span residues Lys-9–Leu-61 and Arg-62–Leu-116. 2 DNA-binding regions (H-T-H motif) span residues Trp-37 to Leu-61 and Trp-89 to Leu-112. Positions Ala-126–Ser-146 are disordered.

As to expression, expressed in seedlings, roots, cotyledons, leaves and apical meristems.

The protein resides in the nucleus. Modulates overall growth by reducing the proliferation activity of meristematic cells and delaying development. Flavonol-specific transcription activator involved in the regulation of several genes of flavonoid biosynthesis. Activates the expression of CHS, CHI, F3H and FLS1. Confers tolerance to UV-B. The chain is Transcription factor MYB11 from Arabidopsis thaliana (Mouse-ear cress).